A 496-amino-acid polypeptide reads, in one-letter code: Lysine--tRNA ligase (496 aa).

Positions 409 and 416 each coordinate Mg(2+).

It belongs to the class-II aminoacyl-tRNA synthetase family. Homodimer. Mg(2+) is required as a cofactor.

The protein localises to the cytoplasm. It carries out the reaction tRNA(Lys) + L-lysine + ATP = L-lysyl-tRNA(Lys) + AMP + diphosphate. The sequence is that of Lysine--tRNA ligase from Streptococcus pneumoniae (strain Hungary19A-6).